The following is a 604-amino-acid chain: MPVTMETSKEHSKKRKRKHGGSGNAALTSANAAKSLVKTTLSSKGEASAEKQEMKKRKTEHPSLMEDRVSENVVDEPEEVVEEDSEASQPPVEQDDEQKSESEQQPELPSLNALSLPQTENEPQKFTELNLSEKTLKAIQEMGFETMTEIQRRGIPPLMAGRDVLGAAKTGSGKTLSFLIPAVEMLSALRFKPRNGTGVIVVSPTRELALQIFGVARELMAHHSQTYGIVIGGANRRAEAEKLTKGVNLLIATPGRLLDHLQNTDGFVFKNLKALVIDEADRILEVGFEDEMRQIVKILPSEDRQTMLFSATQTTKVEDLARISLRPGPLYINVDHRKEHSTVEGLEQGYVICDSDKRFLLLFSFLKRNLKKKIIVFFSSCNCVKYHAELLNYIDLPVLDLHGKQKQQKRTNTFFEFCNAKQGTLICTDVAARGLDIPAVDWIIQFDPPDDPRDYIHRVGRTARGANGKGRSLMFLQPSEVGFLKHLKDARVPVVEFEFPAKKIVNVQSQLEKLIGQNYYLNKSAKDGYRSYLQAYASHSLRSVFDVNKLDLVKVAKGFGFPTPPRVDISLGASMSRDKKQTSRRNYGSQPRHAPKFKRKTSDD.

The interval 1–126 is disordered; that stretch reads MPVTMETSKE…PQTENEPQKF (126 aa). A compositionally biased stretch (basic residues) spans 11–20; sequence HSKKRKRKHG. Residues 25 to 45 are compositionally biased toward polar residues; it reads AALTSANAAKSLVKTTLSSKG. Positions 60–70 are enriched in basic and acidic residues; it reads EHPSLMEDRVS. Over residues 73–86 the composition is skewed to acidic residues; sequence VVDEPEEVVEEDSE. The span at 112-121 shows a compositional bias: polar residues; it reads NALSLPQTEN. The Q motif motif lies at 124 to 152; that stretch reads QKFTELNLSEKTLKAIQEMGFETMTEIQR. One can recognise a Helicase ATP-binding domain in the interval 155–331; sequence IPPLMAGRDV…RISLRPGPLY (177 aa). 168 to 175 lines the ATP pocket; the sequence is AKTGSGKT. A DEAD box motif is present at residues 278-281; it reads DEAD. The 171-residue stretch at 345–515 folds into the Helicase C-terminal domain; it reads GLEQGYVICD…NVQSQLEKLI (171 aa). Residues 570 to 604 form a disordered region; sequence SLGASMSRDKKQTSRRNYGSQPRHAPKFKRKTSDD. Residues 593–604 show a composition bias toward basic residues; that stretch reads HAPKFKRKTSDD.

Belongs to the DEAD box helicase family. DDX18/HAS1 subfamily. As to quaternary structure, associates in the nucleolus with the 60S and pre-60S ribosomal subunits.

The protein localises to the nucleus. Its subcellular location is the nucleolus. The catalysed reaction is ATP + H2O = ADP + phosphate + H(+). Functionally, ATP-dependent RNA helicase involved in 40S ribosomal subunit biogenesis. Required for the processing and cleavage of 35S pre-rRNA at sites A0, A1, and A2, leading to mature 18S rRNA. The polypeptide is ATP-dependent RNA helicase HAS1 (HAS1) (Coccidioides immitis (strain RS) (Valley fever fungus)).